The following is a 186-amino-acid chain: Photosystem I assembly protein Ycf4 (186 aa).

A run of 2 helical transmembrane segments spans residues 26 to 46 (WATIIFIGALGFLLAGLSSYF) and 66 to 86 (IVMTFYGSIGVFLSLFLWLTI).

It belongs to the Ycf4 family.

The protein localises to the plastid. Its subcellular location is the chloroplast thylakoid membrane. Seems to be required for the assembly of the photosystem I complex. The sequence is that of Photosystem I assembly protein Ycf4 from Pyropia yezoensis (Susabi-nori).